The chain runs to 368 residues: N-acetylneuraminate epimerase (368 aa).

An N-terminal signal peptide occupies residues 1–19 (MNKTITALAIMMASFAANA). Kelch repeat units lie at residues 40–84 (TVYI…AFID), 86–137 (NLYV…FVHN), 139–173 (KAYV…KINA), 174–219 (HYFD…VNKG), 222–265 (TWLI…VAGG), 287–336 (ENYQ…PWNN), and 338–367 (LLII…VTVQ). The Proton acceptor role is filled by glutamate 228.

In terms of assembly, homodimer.

Its subcellular location is the periplasm. The catalysed reaction is N-acetyl-alpha-neuraminate = N-acetyl-beta-neuraminate. Converts alpha-N-acetylneuranimic acid (Neu5Ac) to the beta-anomer, accelerating the equilibrium between the alpha- and beta-anomers. Probably facilitates sialidase-negative bacteria to compete successfully for limited amounts of extracellular Neu5Ac, which is likely taken up in the beta-anomer. In addition, the rapid removal of sialic acid from solution might be advantageous to the bacterium to damp down host responses. Forms linear aceneuramate during interconversion of Neu5Ac anomers. The polypeptide is N-acetylneuraminate epimerase (nanM) (Escherichia coli (strain K12)).